A 157-amino-acid polypeptide reads, in one-letter code: MSKEIILTQEGLEELKAELKNLLEVTRPKVIEELVEARNQGDLSENADYDAARNRQAEVEARIKEVETLINRAKVIDNSKTHSTGEVKIGSTVEFLSSLDHKTKEIKIVGAIEADPFSRLISNESPIAKAILGKKIGDTVEIKDILKPYKITIKSIK.

The stretch at 1-75 (MSKEIILTQE…VETLINRAKV (75 aa)) forms a coiled coil.

The protein belongs to the GreA/GreB family.

In terms of biological role, necessary for efficient RNA polymerase transcription elongation past template-encoded arresting sites. The arresting sites in DNA have the property of trapping a certain fraction of elongating RNA polymerases that pass through, resulting in locked ternary complexes. Cleavage of the nascent transcript by cleavage factors such as GreA or GreB allows the resumption of elongation from the new 3'terminus. GreA releases sequences of 2 to 3 nucleotides. The polypeptide is Transcription elongation factor GreA (Mycoplasma capricolum subsp. capricolum (strain California kid / ATCC 27343 / NCTC 10154)).